A 278-amino-acid chain; its full sequence is Large ribosomal subunit protein uL2 (278 aa).

2 disordered regions span residues 1–58 (MGIR…GGGH) and 210–278 (GRMR…GKKR). Residues 23-33 (EVTRSEPEKSL) are compositionally biased toward basic and acidic residues. The segment covering 40-49 (SGGRNSTGRI) has biased composition (low complexity). Composition is skewed to basic residues over residues 210 to 220 (GRMRWKGKRPS) and 269 to 278 (VRRRRTGKKR).

It belongs to the universal ribosomal protein uL2 family. As to quaternary structure, part of the 50S ribosomal subunit. Forms a bridge to the 30S subunit in the 70S ribosome.

Functionally, one of the primary rRNA binding proteins. Required for association of the 30S and 50S subunits to form the 70S ribosome, for tRNA binding and peptide bond formation. It has been suggested to have peptidyltransferase activity; this is somewhat controversial. Makes several contacts with the 16S rRNA in the 70S ribosome. The chain is Large ribosomal subunit protein uL2 from Beutenbergia cavernae (strain ATCC BAA-8 / DSM 12333 / CCUG 43141 / JCM 11478 / NBRC 16432 / NCIMB 13614 / HKI 0122).